The sequence spans 155 residues: uncharacterized protein (155 aa).

The disordered stretch occupies residues 1 to 34 (MESLQTPQHRENQDKREKEYGVKHMPMGNNAGNL). Positions 8 to 22 (QHRENQDKREKEYGV) are enriched in basic and acidic residues. The helical transmembrane segment at 115–135 (MSLLLLPAFSGLTWAPFLFLF) threads the bilayer.

The protein localises to the membrane. This is an uncharacterized protein from Homo sapiens (Human).